Consider the following 297-residue polypeptide: N-acetylneuraminate lyase (297 aa).

Residues S47 and T48 each coordinate aceneuramate. Catalysis depends on Y137, which acts as the Proton donor. K165 serves as the catalytic Schiff-base intermediate with substrate. Aceneuramate-binding residues include T167, G189, D191, E192, and S208.

It belongs to the DapA family. NanA subfamily. As to quaternary structure, homotetramer.

The protein localises to the cytoplasm. The enzyme catalyses aceneuramate = aldehydo-N-acetyl-D-mannosamine + pyruvate. The protein operates within amino-sugar metabolism; N-acetylneuraminate degradation; D-fructose 6-phosphate from N-acetylneuraminate: step 1/5. Its function is as follows. Catalyzes the reversible aldol cleavage of N-acetylneuraminic acid (sialic acid; Neu5Ac) to form pyruvate and N-acetylmannosamine (ManNAc) via a Schiff base intermediate. The polypeptide is N-acetylneuraminate lyase (Escherichia coli (strain SE11)).